The following is a 295-amino-acid chain: Glutamyl-Q tRNA(Asp) synthetase (295 aa).

Residues R9–T13 and E45 each bind L-glutamate. Positions P12 to S22 match the 'HIGH' region motif. Positions 101, 103, 115, and 119 each coordinate Zn(2+). L-glutamate-binding residues include Y172 and R190. Residues K228 to S232 carry the 'KMSKS' region motif. K231 is a binding site for ATP.

This sequence belongs to the class-I aminoacyl-tRNA synthetase family. GluQ subfamily. Requires Zn(2+) as cofactor.

Catalyzes the tRNA-independent activation of glutamate in presence of ATP and the subsequent transfer of glutamate onto a tRNA(Asp). Glutamate is transferred on the 2-amino-5-(4,5-dihydroxy-2-cyclopenten-1-yl) moiety of the queuosine in the wobble position of the QUC anticodon. The chain is Glutamyl-Q tRNA(Asp) synthetase from Pseudomonas entomophila (strain L48).